Reading from the N-terminus, the 166-residue chain is Large ribosomal subunit protein uL11x (166 aa).

Belongs to the universal ribosomal protein uL11 family.

Functionally, binds directly to 26S ribosomal RNA. In Arabidopsis thaliana (Mouse-ear cress), this protein is Large ribosomal subunit protein uL11x (RPL12C).